A 209-amino-acid chain; its full sequence is Uracil phosphoribosyltransferase (209 aa).

Residues Arg-79, Arg-104, and 131-139 each bind 5-phospho-alpha-D-ribose 1-diphosphate; that span reads DPMLATGGS. Uracil-binding positions include Ile-194 and 199 to 201; that span reads GDA. Asp-200 contributes to the 5-phospho-alpha-D-ribose 1-diphosphate binding site.

The protein belongs to the UPRTase family. Requires Mg(2+) as cofactor.

The catalysed reaction is UMP + diphosphate = 5-phospho-alpha-D-ribose 1-diphosphate + uracil. It participates in pyrimidine metabolism; UMP biosynthesis via salvage pathway; UMP from uracil: step 1/1. With respect to regulation, allosterically activated by GTP. Its function is as follows. Catalyzes the conversion of uracil and 5-phospho-alpha-D-ribose 1-diphosphate (PRPP) to UMP and diphosphate. This chain is Uracil phosphoribosyltransferase, found in Exiguobacterium sibiricum (strain DSM 17290 / CCUG 55495 / CIP 109462 / JCM 13490 / 255-15).